We begin with the raw amino-acid sequence, 132 residues long: Ribonuclease VapC15 (132 aa).

In terms of domain architecture, PINc spans 1–121; it reads MIVDTSVWIA…HRDRDYEAIR (121 aa). Asp96 is a binding site for Mg(2+). Mn(2+)-binding residues include Asp96, Asp114, and Asp116.

This sequence belongs to the PINc/VapC protein family. As to quaternary structure, crystallizes as a VapB15-VapC15(2) heterotrimer and as a VapB15(2)-VapC15(2) heterotetramer; each toxin pair forms a homodimer which creates a channel in which the antitoxin binds. It depends on Mg(2+) as a cofactor. Requires Mn(2+) as cofactor.

RNase activity inhibited by EDTA. In terms of biological role, toxic component of a type II toxin-antitoxin (TA) system. Degrades total E.coli RNA, which is partially inhibited by cognate antitoxin VapB15. Upon expression in M.smegmatis inhibits colony formation, which is neutralized by coexpression with VapB15. The chain is Ribonuclease VapC15 from Mycobacterium tuberculosis (strain ATCC 25618 / H37Rv).